We begin with the raw amino-acid sequence, 403 residues long: Anti-sigma-I factor RsgI8 (403 aa).

Topologically, residues 1–59 (MTKQKGTILKLKNNLAIIMTSDCKIVSIKRQPGMYEGLEISFNKNEIINKKNKLAFYSR) are cytoplasmic. Residues 4 to 51 (QKGTILKLKNNLAIIMTSDCKIVSIKRQPGMYEGLEISFNKNEIINKK) enclose the RsgI N-terminal anti-sigma domain. A helical membrane pass occupies residues 60 to 80 (IAAGIAAIFIIMVISFNLFNN). Over 81–403 (NDVYAYVAID…KAKNSIEKMP (323 aa)) the chain is Extracellular. Composition is skewed to basic and acidic residues over residues 254–314 (VHNV…EPAK), 324–335 (LPKDKTIPEEKT), and 349–403 (VEPK…EKMP). The tract at residues 254–403 (VHNVKKEEPK…KAKNSIEKMP (150 aa)) is disordered.

In terms of assembly, interacts (via RsgI N-terminal anti-sigma domain) with SigI8.

Its subcellular location is the cell membrane. In terms of biological role, anti-sigma factor for SigI8. Negatively regulates SigI8 activity through direct interaction. In Acetivibrio thermocellus (strain ATCC 27405 / DSM 1237 / JCM 9322 / NBRC 103400 / NCIMB 10682 / NRRL B-4536 / VPI 7372) (Clostridium thermocellum), this protein is Anti-sigma-I factor RsgI8.